Reading from the N-terminus, the 82-residue chain is Hepcidin (82 aa).

A signal peptide spans 1–23; it reads MALSVQIRAACLLLLLLVSLTAG. The propeptide occupies 24–53; sequence SVLPSQTRQLTDLRTQDTAGATAGLTPVAQ. 4 cysteine pairs are disulfide-bonded: C64-C80, C67-C70, C68-C76, and C71-C79.

This sequence belongs to the hepcidin family. In terms of assembly, interacts with SLC40A1; this interaction promotes SLC40A1 rapid ubiquitination.

The protein localises to the secreted. Its function is as follows. Liver-produced hormone that constitutes the main circulating regulator of iron absorption and distribution across tissues. Acts by promoting endocytosis and degradation of ferroportin/SLC40A1, leading to the retention of iron in iron-exporting cells and decreased flow of iron into plasma. Controls the major flows of iron into plasma: absorption of dietary iron in the intestine, recycling of iron by macrophages, which phagocytose old erythrocytes and other cells, and mobilization of stored iron from hepatocytes. In terms of biological role, has strong antimicrobial activity against E.coli ML35P N.cinerea and weaker against S.epidermidis, S.aureus and group b streptococcus bacteria. Active against the fungus C.albicans. No activity against P.aeruginosa. The polypeptide is Hepcidin (HAMP) (Sus scrofa (Pig)).